A 391-amino-acid polypeptide reads, in one-letter code: Casein kinase II subunit alpha (391 aa).

The interval Gln-36 to Leu-41 is interaction with beta subunit. Positions Tyr-39–Phe-324 constitute a Protein kinase domain. ATP is bound by residues Leu-45–Val-53 and Lys-68. The Proton acceptor role is filled by Asp-156. Thr-344 and Thr-360 each carry phosphothreonine; by CDK1. 2 positions are modified to phosphoserine; by CDK1: Ser-362 and Ser-370.

This sequence belongs to the protein kinase superfamily. Ser/Thr protein kinase family. CK2 subfamily. Heterotetramer composed of two catalytic subunits (alpha chain and/or alpha' chain) and two regulatory subunits (beta chains). The tetramer can exist as a combination of 2 alpha/2 beta, 2 alpha'/2 beta or 1 alpha/1 alpha'/2 beta subunits. Also part of a CK2-SPT16-SSRP1 complex composed of SSRP1, SUPT16H, CSNK2A1, CSNK2A2 and CSNK2B, which forms following UV irradiation. Interacts with RNPS1. Interacts with SNAI1. Interacts with PML. Interacts with CCAR2. Interacts with HIRIP3. Phosphorylated at Thr-344, Thr-360, Ser-362 and Ser-370 by CDK1 in prophase and metaphase and dephosphorylated during anaphase. Phosphorylation does not directly affect casein kinase 2 activity, but may contribute to its regulation by forming binding sites for interacting proteins and/or targeting it to different compartments.

It is found in the nucleus. It catalyses the reaction L-seryl-[protein] + ATP = O-phospho-L-seryl-[protein] + ADP + H(+). It carries out the reaction L-threonyl-[protein] + ATP = O-phospho-L-threonyl-[protein] + ADP + H(+). With respect to regulation, constitutively active protein kinase whose activity is not directly affected by phosphorylation. Seems to be regulated by level of expression and localization. In terms of biological role, catalytic subunit of a constitutively active serine/threonine-protein kinase complex that phosphorylates a large number of substrates containing acidic residues C-terminal to the phosphorylated serine or threonine. Regulates numerous cellular processes, such as cell cycle progression, apoptosis and transcription, as well as viral infection. May act as a regulatory node which integrates and coordinates numerous signals leading to an appropriate cellular response. During mitosis, functions as a component of the p53/TP53-dependent spindle assembly checkpoint (SAC) that maintains cyclin-B-CDK1 activity and G2 arrest in response to spindle damage. Also required for p53/TP53-mediated apoptosis, phosphorylating 'Ser-392' of p53/TP53 following UV irradiation. Phosphorylates a number of DNA repair proteins in response to DNA damage, such as MDC1, MRE11, RAD9A, RAD51 and HTATSF1, promoting their recruitment to DNA damage sites. Can also negatively regulate apoptosis. Phosphorylates the caspases CASP9 and CASP2 and the apoptotic regulator NOL3. Phosphorylation protects CASP9 from cleavage and activation by CASP8, and inhibits the dimerization of CASP2 and activation of CASP8. Phosphorylates YY1, protecting YY1 from cleavage by CASP7 during apoptosis. Regulates transcription by direct phosphorylation of RNA polymerases I, II, III and IV. Also phosphorylates and regulates numerous transcription factors including NF-kappa-B, STAT1, CREB1, IRF1, IRF2, ATF1, ATF4, SRF, MAX, JUN, FOS, MYC and MYB. Phosphorylates Hsp90 and its co-chaperones FKBP4 and CDC37, which is essential for chaperone function. Mediates sequential phosphorylation of FNIP1, promoting its gradual interaction with Hsp90, leading to activate both kinase and non-kinase client proteins of Hsp90. Regulates Wnt signaling by phosphorylating CTNNB1 and the transcription factor LEF1. Acts as an ectokinase that phosphorylates several extracellular proteins. Phosphorylates PML at 'Ser-565' and primes it for ubiquitin-mediated degradation. Plays an important role in the circadian clock function by phosphorylating BMAL1 at 'Ser-90' which is pivotal for its interaction with CLOCK and which controls CLOCK nuclear entry. Phosphorylates FMR1, promoting FMR1-dependent formation of a membraneless compartment. May phosphorylate histone H2A on 'Ser-1'. In Mus musculus (Mouse), this protein is Casein kinase II subunit alpha (Csnk2a1).